An 83-amino-acid chain; its full sequence is Protein FAM240A (83 aa).

Belongs to the FAM240 family.

The chain is Protein FAM240A from Homo sapiens (Human).